The primary structure comprises 481 residues: Xylulose kinase (481 aa).

Position 81 to 82 (81 to 82) interacts with substrate; the sequence is QH. Aspartate 239 acts as the Proton acceptor in catalysis.

This sequence belongs to the FGGY kinase family.

It catalyses the reaction D-xylulose + ATP = D-xylulose 5-phosphate + ADP + H(+). Catalyzes the phosphorylation of D-xylulose to D-xylulose 5-phosphate. The sequence is that of Xylulose kinase from Streptomyces rubiginosus.